The following is an 85-amino-acid chain: Toxin BmKa3 (85 aa).

The signal sequence occupies residues 1–19 (MNYLVFFSLALLLMTGVES). Residues 21–83 (RDGYIADDKN…VPIRVPGKCN (63 aa)) enclose the LCN-type CS-alpha/beta domain. 4 disulfide bridges follow: C31/C82, C35/C55, C41/C65, and C45/C67.

The protein belongs to the long (4 C-C) scorpion toxin superfamily. Sodium channel inhibitor family. Alpha subfamily. As to expression, expressed by the venom gland.

The protein localises to the secreted. Alpha toxins bind voltage-independently at site-3 of sodium channels (Nav) and inhibit the inactivation of the activated channels, thereby blocking neuronal transmission. The polypeptide is Toxin BmKa3 (Olivierus martensii (Manchurian scorpion)).